A 921-amino-acid chain; its full sequence is Isoleucine--tRNA ligase 1 (921 aa).

Positions 57–67 (PYANGDIHMGH) match the 'HIGH' region motif. Residue Glu552 coordinates L-isoleucyl-5'-AMP. The short motif at 593-597 (KMSKS) is the 'KMSKS' region element. Lys596 provides a ligand contact to ATP. Zn(2+)-binding residues include Cys888, Cys891, Cys908, and Cys911.

This sequence belongs to the class-I aminoacyl-tRNA synthetase family. IleS type 1 subfamily. As to quaternary structure, monomer. Requires Zn(2+) as cofactor.

The protein localises to the cytoplasm. The enzyme catalyses tRNA(Ile) + L-isoleucine + ATP = L-isoleucyl-tRNA(Ile) + AMP + diphosphate. Catalyzes the attachment of isoleucine to tRNA(Ile). As IleRS can inadvertently accommodate and process structurally similar amino acids such as valine, to avoid such errors it has two additional distinct tRNA(Ile)-dependent editing activities. One activity is designated as 'pretransfer' editing and involves the hydrolysis of activated Val-AMP. The other activity is designated 'posttransfer' editing and involves deacylation of mischarged Val-tRNA(Ile). The polypeptide is Isoleucine--tRNA ligase 1 (Bacillus cereus (strain ATCC 10987 / NRS 248)).